Here is a 318-residue protein sequence, read N- to C-terminus: Pantothenate kinase (318 aa).

96–103 (GSVAVGKS) contacts ATP.

It belongs to the prokaryotic pantothenate kinase family.

The protein localises to the cytoplasm. The catalysed reaction is (R)-pantothenate + ATP = (R)-4'-phosphopantothenate + ADP + H(+). The protein operates within cofactor biosynthesis; coenzyme A biosynthesis; CoA from (R)-pantothenate: step 1/5. The polypeptide is Pantothenate kinase (Coxiella burnetii (strain Dugway 5J108-111)).